The primary structure comprises 71 residues: DNA-directed RNA polymerase subunit 10-like protein (71 aa).

4 residues coordinate Zn(2+): Cys-7, Cys-10, Cys-44, and Cys-45.

The protein belongs to the archaeal Rpo10/eukaryotic RPB10 RNA polymerase subunit family. In terms of assembly, interacts with IYO.

The protein resides in the nucleus. This is DNA-directed RNA polymerase subunit 10-like protein from Arabidopsis thaliana (Mouse-ear cress).